Here is a 5218-residue protein sequence, read N- to C-terminus: HC-toxin synthetase (5218 aa).

The interval 223–620 is adenylation 1; sequence SARAHEQDAN…VGRSDTQIKL (398 aa). The 75-residue stretch at 769 to 843 folds into the Carrier 1 domain; that stretch reads MNDDSLLLTA…TAASCIKSAQ (75 aa). The residue at position 803 (serine 803) is an O-(pantetheine 4'-phosphoryl)serine. Positions 858–1154 are condensation 1; that stretch reads IPVSPIQKLF…GWFTTISPVY (297 aa). Residues 1338–1806 form an epimerization region; it reads EGVYPGSPMQ…LPIVSEHDTA (469 aa). Residues 1828 to 2233 form an adenylation 2 region; it reads SRKVVEHPQR…IGRKDTQVKM (406 aa). Positions 2379 to 2453 constitute a Carrier 2 domain; sequence ETTDTVEDRL…DMAKLFSHGQ (75 aa). Serine 2414 is subject to O-(pantetheine 4'-phosphoryl)serine. Positions 2531–2929 are condensation 2; sequence EDVFPCTPMQ…MEQFGHNLQT (399 aa). Residues 2979-3386 form an adenylation 3 region; sequence LEETAQSQPA…GRKDGQIKLR (408 aa). One can recognise a Carrier 3 domain in the interval 3532 to 3608; the sequence is QVLTTNESVL…DMAGQISFVQ (77 aa). At serine 3569 the chain carries O-(pantetheine 4'-phosphoryl)serine. The condensation 3 stretch occupies residues 3649–4102; it reads EDVYPCTPLQ…PALSEAHLAE (454 aa). The interval 4134–4530 is adenylation 4; that stretch reads RRAQQSPNSQ…NLYYVRRKDS (397 aa). Residues 4666–4740 form the Carrier 4 domain; it reads THTQKLLRQL…AMSSLIDEHN (75 aa). Serine 4701 bears the O-(pantetheine 4'-phosphoryl)serine mark. A condensation 4 region spans residues 4785 to 5101; that stretch reads TLPCTEYQQM…SAIREFIPQA (317 aa).

Belongs to the NRP synthetase family. Pantetheine 4'-phosphate is required as a cofactor.

Its pathway is mycotoxin biosynthesis; HC-toxin biosynthesis. In terms of biological role, non-ribosomal peptide synthetase, part of the diffuse TOX2 gene cluster that mediates the biosynthesis of the HC-toxin, cyclic tetrapeptide of structure cyclo(D-Pro-L-Ala-D-Ala-L-Aeo), where Aeo stands for 2-amino-9,10-epoxi-8-oxodecanoic acid. HC-toxin is a determinant of specificity and virulence in the interaction between the producing fungus and its host, maize. HTS1, contains four modules, one for each amino acid in HC-toxin, with the order of activation being most likely Pro, Ala, Ala, and Aeo. In addition, HTS1 has one epimerase domain between modules 1 and 2, which is responsible for epimerizing L-Pro to D-Pro. The absence of an epimerizing domain after module 3, for producing D-Ala, can be explained by the presence in the cluster of TOXG, an Ala racemase, which produces D-Ala for incorporation by HTS1 into HC-toxin. The sequence is that of HC-toxin synthetase from Cochliobolus carbonum (Maize leaf spot fungus).